A 377-amino-acid chain; its full sequence is Opsin-1 (377 aa).

Residues 1–58 (MDPGPGLAALQAWAAKSPAYGAANQTVVDKVPPDMMHMIDPHWYQFPPMNPLWHALLG) are Extracellular-facing. N-linked (GlcNAc...) asparagine glycosylation is present at Asn-24. Residues 59–79 (FTIGVLGFVSISGNGMVIYIF) form a helical membrane-spanning segment. Residues 80 to 92 (MSTKSLKTPSNLL) are Cytoplasmic-facing. The chain crosses the membrane as a helical span at residues 93-113 (VVNLAFSDFLMMCAMSPAMVV). Over 114-129 (NCYYETWVWGPFACEL) the chain is Extracellular. Cys-127 and Cys-204 form a disulfide bridge. A helical membrane pass occupies residues 130–150 (YACAGSLFGCASIWTMTMIAF). Topologically, residues 151–169 (DRYNVIVKGIAAKPMTSNG) are cytoplasmic. The chain crosses the membrane as a helical span at residues 170 to 190 (ALLRILGIWVFSLAWTLLPFF). At 191 to 220 (GWNRYVPEGNMTACGTDYLSKSWVSRSYIL) the chain is on the extracellular side. Residue Asn-200 is glycosylated (N-linked (GlcNAc...) asparagine). Residues 221–241 (IYSVFVYFLPLLLIIYSYFFI) form a helical membrane-spanning segment. Residues 242–280 (VQAVAAHEKAMREQAKKMNVASLRSSEAANTSAECKLAK) are Cytoplasmic-facing. The helical transmembrane segment at 281–301 (VALMTISLWFMAWTPYLVINY) threads the bilayer. Over 302–312 (TGVFESAPISP) the chain is Extracellular. Residues 313–335 (LATIWGSLFAKANAVYNPIVYGI) form a helical membrane-spanning segment. At 336–377 (SHPKYQAALYAKFPSLQCQSAPEDAGSVASGTTAVSEEKPAA) the chain is on the cytoplasmic side. Positions 357-377 (PEDAGSVASGTTAVSEEKPAA) are disordered.

The protein belongs to the G-protein coupled receptor 1 family. Opsin subfamily. In the retina, expression is abundant and uniform in the anterior-posterior and oblique cells of the retinulae, with some expression in the proximal cells. There is no expression in the dorsal rim retinulae (at protein level).

It localises to the cell projection. The protein resides in the rhabdomere membrane. Its function is as follows. Visual pigments are the light-absorbing molecules that mediate vision. They consist of an apoprotein, opsin, covalently linked to cis-retinal. May play a role in photoperiodic photoreception. This chain is Opsin-1 (OP1), found in Manduca sexta (Tobacco hawkmoth).